Consider the following 306-residue polypeptide: Palmitoyl-protein thioesterase 1 (306 aa).

An N-terminal signal peptide occupies residues 1 to 27 (MASPGCLWLLAVALLPWTCASRALQHL). The S-palmitoyl cysteine; by ZDHHC3 and ZDHHC7 moiety is linked to residue C6. Intrachain disulfides connect C45/C46, C96/C128, and C152/C160. The active site involves S115. N197, N212, and N232 each carry an N-linked (GlcNAc...) asparagine glycan. Active-site residues include D233 and H289.

The protein belongs to the palmitoyl-protein thioesterase family. In terms of assembly, interacts with CLN5. Interacts with ATP5F1A and ATP5F1B. Glycosylated.

The protein resides in the lysosome. It localises to the secreted. It is found in the golgi apparatus. The protein localises to the endoplasmic reticulum. It catalyses the reaction S-hexadecanoyl-L-cysteinyl-[protein] + H2O = L-cysteinyl-[protein] + hexadecanoate + H(+). The catalysed reaction is hexadecanoyl-CoA + H2O = hexadecanoate + CoA + H(+). The enzyme catalyses S-hexadecanoyl-N-acetylcysteamine + H2O = N-acetylcysteamine + hexadecanoate + H(+). It carries out the reaction S-hexadecanoyl-N-acetylcysteine methyl ester + H2O = N-acetylcysteine methyl ester + hexadecanoate + H(+). With respect to regulation, palmitoylation reduces PPT1 enzymatic activity. Functionally, has thioesterase activity against fatty acid thioesters with 14 -18 carbons, including palmitoyl-CoA, S-palmitoyl-N-acetylcysteamine, and palmitoylated proteins. In contrast to PPT2, PPT1 can hydrolyze palmitoylated proteins and palmitoylcysteine. The polypeptide is Palmitoyl-protein thioesterase 1 (PPT1) (Homo sapiens (Human)).